The following is a 169-amino-acid chain: Transcription antitermination protein NusB (169 aa).

The segment at 147 to 169 is disordered; sequence RGLIDQSFSRPQKPESEATEIEE.

The protein belongs to the NusB family.

Involved in transcription antitermination. Required for transcription of ribosomal RNA (rRNA) genes. Binds specifically to the boxA antiterminator sequence of the ribosomal RNA (rrn) operons. The sequence is that of Transcription antitermination protein NusB from Chlorobium chlorochromatii (strain CaD3).